A 197-amino-acid polypeptide reads, in one-letter code: Holliday junction branch migration complex subunit RuvA (197 aa).

The tract at residues 1 to 64 is domain I; that stretch reads MIDSIVGIIQ…LSELECYGFL (64 aa). Residues 65 to 143 form a domain II region; sequence TREERELFLK…KEFKVASTSG (79 aa). A flexible linker region spans residues 144-152; sequence KEEKTYEKL. Residues 152–197 are domain III; the sequence is LEEISLALLSLGYDIDEVNQVLSSEDFSELSLEDGIKLALKKLSKI.

This sequence belongs to the RuvA family. In terms of assembly, homotetramer. Forms an RuvA(8)-RuvB(12)-Holliday junction (HJ) complex. HJ DNA is sandwiched between 2 RuvA tetramers; dsDNA enters through RuvA and exits via RuvB. An RuvB hexamer assembles on each DNA strand where it exits the tetramer. Each RuvB hexamer is contacted by two RuvA subunits (via domain III) on 2 adjacent RuvB subunits; this complex drives branch migration. In the full resolvosome a probable DNA-RuvA(4)-RuvB(12)-RuvC(2) complex forms which resolves the HJ.

It is found in the cytoplasm. Functionally, the RuvA-RuvB-RuvC complex processes Holliday junction (HJ) DNA during genetic recombination and DNA repair, while the RuvA-RuvB complex plays an important role in the rescue of blocked DNA replication forks via replication fork reversal (RFR). RuvA specifically binds to HJ cruciform DNA, conferring on it an open structure. The RuvB hexamer acts as an ATP-dependent pump, pulling dsDNA into and through the RuvAB complex. HJ branch migration allows RuvC to scan DNA until it finds its consensus sequence, where it cleaves and resolves the cruciform DNA. In Caldicellulosiruptor bescii (strain ATCC BAA-1888 / DSM 6725 / KCTC 15123 / Z-1320) (Anaerocellum thermophilum), this protein is Holliday junction branch migration complex subunit RuvA.